Reading from the N-terminus, the 182-residue chain is Large ribosomal subunit protein uL6 (182 aa).

This sequence belongs to the universal ribosomal protein uL6 family. As to quaternary structure, part of the 50S ribosomal subunit.

In terms of biological role, this protein binds to the 23S rRNA, and is important in its secondary structure. It is located near the subunit interface in the base of the L7/L12 stalk, and near the tRNA binding site of the peptidyltransferase center. The protein is Large ribosomal subunit protein uL6 of Methanococcus maripaludis (strain C7 / ATCC BAA-1331).